The chain runs to 261 residues: Ribosome biogenesis protein C3_06160C_A (261 aa).

Positions 1–38 (MPQNEYIEQHIKKHGRRLDYEERKRKKEAREGHRVAKD) are disordered. 2 short sequence motifs (nuclear localization signal) span residues 11 to 18 (IKKHGRRL) and 51 to 58 (AKKRYAEK). The span at 17-37 (RLDYEERKRKKEAREGHRVAK) shows a compositional bias: basic and acidic residues. The tract at residues 59–85 (VAMKKKIKAHQESKVKGPSTPKAEDGE) is disordered.

Belongs to the eukaryotic ribosomal protein eS8 family. Ribosome biogenesis protein NSA2 subfamily. Component of the pre-66S ribosomal particle. Interacts with NOP7 and RRP1. Interacts with RSA4 (via WD repeats).

It localises to the nucleus. The protein resides in the nucleolus. Functionally, involved in the biogenesis of the 60S ribosomal subunit. May play a part in the quality control of pre-60S particles. In Candida albicans (strain SC5314 / ATCC MYA-2876) (Yeast), this protein is Ribosome biogenesis protein C3_06160C_A.